Reading from the N-terminus, the 119-residue chain is Large ribosomal subunit protein uL18 (119 aa).

Belongs to the universal ribosomal protein uL18 family. Part of the 50S ribosomal subunit; part of the 5S rRNA/L5/L18/L25 subcomplex. Contacts the 5S and 23S rRNAs.

This is one of the proteins that bind and probably mediate the attachment of the 5S RNA into the large ribosomal subunit, where it forms part of the central protuberance. This is Large ribosomal subunit protein uL18 from Lactobacillus johnsonii (strain CNCM I-12250 / La1 / NCC 533).